The sequence spans 434 residues: Serine hydroxymethyltransferase (434 aa).

(6S)-5,6,7,8-tetrahydrofolate is bound by residues leucine 133 and glycine 137–leucine 139. Position 242 is an N6-(pyridoxal phosphate)lysine (lysine 242). Serine 366–phenylalanine 368 contacts (6S)-5,6,7,8-tetrahydrofolate.

Belongs to the SHMT family. In terms of assembly, homodimer. Pyridoxal 5'-phosphate is required as a cofactor.

It localises to the cytoplasm. It catalyses the reaction (6R)-5,10-methylene-5,6,7,8-tetrahydrofolate + glycine + H2O = (6S)-5,6,7,8-tetrahydrofolate + L-serine. It functions in the pathway one-carbon metabolism; tetrahydrofolate interconversion. It participates in amino-acid biosynthesis; glycine biosynthesis; glycine from L-serine: step 1/1. Catalyzes the reversible interconversion of serine and glycine with tetrahydrofolate (THF) serving as the one-carbon carrier. This reaction serves as the major source of one-carbon groups required for the biosynthesis of purines, thymidylate, methionine, and other important biomolecules. Also exhibits THF-independent aldolase activity toward beta-hydroxyamino acids, producing glycine and aldehydes, via a retro-aldol mechanism. The protein is Serine hydroxymethyltransferase of Erythrobacter litoralis (strain HTCC2594).